Here is a 120-residue protein sequence, read N- to C-terminus: NAD(P)H-quinone oxidoreductase subunit 3, chloroplastic (120 aa).

Helical transmembrane passes span 9–29, 64–84, and 88–108; these read IFWAFLIISSVIPILAFLISG, MFALVFVVFDVETVFLYPWAM, and VLGVSVFIEALIFVLIPIVGS.

It belongs to the complex I subunit 3 family. As to quaternary structure, NDH is composed of at least 16 different subunits, 5 of which are encoded in the nucleus.

The protein localises to the plastid. It localises to the chloroplast thylakoid membrane. It carries out the reaction a plastoquinone + NADH + (n+1) H(+)(in) = a plastoquinol + NAD(+) + n H(+)(out). The catalysed reaction is a plastoquinone + NADPH + (n+1) H(+)(in) = a plastoquinol + NADP(+) + n H(+)(out). In terms of biological role, NDH shuttles electrons from NAD(P)H:plastoquinone, via FMN and iron-sulfur (Fe-S) centers, to quinones in the photosynthetic chain and possibly in a chloroplast respiratory chain. The immediate electron acceptor for the enzyme in this species is believed to be plastoquinone. Couples the redox reaction to proton translocation, and thus conserves the redox energy in a proton gradient. In Calycanthus floridus var. glaucus (Eastern sweetshrub), this protein is NAD(P)H-quinone oxidoreductase subunit 3, chloroplastic.